Reading from the N-terminus, the 341-residue chain is Glyceraldehyde-3-phosphate dehydrogenase, cytosolic (341 aa).

Residues 14–15 and Asp36 contribute to the NAD(+) site; that span reads RI. D-glyceraldehyde 3-phosphate-binding positions include 153-155, Thr184, 213-214, and Arg236; these read SCT and TG. Residue Cys154 is the Nucleophile of the active site. Asn318 lines the NAD(+) pocket.

It belongs to the glyceraldehyde-3-phosphate dehydrogenase family. In terms of assembly, homotetramer.

The protein localises to the cytoplasm. The enzyme catalyses D-glyceraldehyde 3-phosphate + phosphate + NAD(+) = (2R)-3-phospho-glyceroyl phosphate + NADH + H(+). Its pathway is carbohydrate degradation; glycolysis; pyruvate from D-glyceraldehyde 3-phosphate: step 1/5. Its function is as follows. Key enzyme in glycolysis that catalyzes the first step of the pathway by converting D-glyceraldehyde 3-phosphate (G3P) into 3-phospho-D-glyceroyl phosphate. Essential for the maintenance of cellular ATP levels and carbohydrate metabolism. In Chlamydomonas reinhardtii (Chlamydomonas smithii), this protein is Glyceraldehyde-3-phosphate dehydrogenase, cytosolic (GAPC).